The primary structure comprises 312 residues: Olfactory receptor 10D3 (312 aa).

Residues 1-26 (MEIKNCSVVTEFILLGIPHTEGFETL) lie on the Extracellular side of the membrane. Residue Asn-5 is glycosylated (N-linked (GlcNAc...) asparagine). The chain crosses the membrane as a helical span at residues 27 to 47 (LFVLFLPFYACTLVGNVSILV). At 48–57 (AVISSTRLHT) the chain is on the cytoplasmic side. Residues 58-78 (PMYFFLGNLSVFDMGFSSVTC) form a helical membrane-spanning segment. Over 79–97 (PKMLFYLMGLSRLISYQDC) the chain is Extracellular. Cys-97 and Cys-179 form a disulfide bridge. A helical membrane pass occupies residues 98-118 (VSQLFFFHFLGSIECFLYTVM). The Cytoplasmic portion of the chain corresponds to 119–139 (AYDRFAAICHPLRYSVIMNSK). Residues 140 to 160 (ICVALAVGTWLLGCFHSSVLT) traverse the membrane as a helical segment. Residues 161 to 197 (SLTFTLPYCGPNEVDHFFCDIPAILPLASADTSLAQR) are Extracellular-facing. The helical transmembrane segment at 198–218 (VSFTNVGLVSLVCFLLILLSY) threads the bilayer. Residues 219-239 (TRITISILSIQSTEGRQRAFS) are Cytoplasmic-facing. The chain crosses the membrane as a helical span at residues 240 to 260 (TCSAHLIAILCAYGPIITIYL). Topologically, residues 261 to 266 (QPTPNP) are extracellular. A helical membrane pass occupies residues 267–287 (MLGTVVQILMNLVGPMLNPLI). Residues 288-312 (YTLRNKEVKIALKKILHGKGSVSEG) lie on the Cytoplasmic side of the membrane.

This sequence belongs to the G-protein coupled receptor 1 family.

The protein localises to the cell membrane. Potential odorant receptor. In Mus musculus (Mouse), this protein is Olfactory receptor 10D3.